The following is a 645-amino-acid chain: ATP-dependent zinc metalloprotease FtsH 3 (645 aa).

Residues 1 to 11 (MQNKRNQSRVL) are Cytoplasmic-facing. Residues 12-32 (WLLLIYITIGIFIYVGVNSLI) traverse the membrane as a helical segment. Topologically, residues 33-110 (GTPDVSKIEY…YVRSLENSWW (78 aa)) are periplasmic. The helical transmembrane segment at 111–131 (ISILTFLLPVFLLIFLFTFLF) threads the bilayer. Residues 132-645 (RSSGGGANQG…ENNLIERKGI (514 aa)) are Cytoplasmic-facing. An ATP-binding site is contributed by 202–209 (GEPGTGKT). His424 is a binding site for Zn(2+). Residue Glu425 is part of the active site. Positions 428 and 501 each coordinate Zn(2+).

This sequence in the central section; belongs to the AAA ATPase family. In the C-terminal section; belongs to the peptidase M41 family. In terms of assembly, homohexamer. The cofactor is Zn(2+).

It localises to the cell inner membrane. In terms of biological role, acts as a processive, ATP-dependent zinc metallopeptidase for both cytoplasmic and membrane proteins. Plays a role in the quality control of integral membrane proteins. The protein is ATP-dependent zinc metalloprotease FtsH 3 of Petrotoga mobilis (strain DSM 10674 / SJ95).